The chain runs to 503 residues: DnaJ homolog subfamily C member 3 (503 aa).

An N-terminal signal peptide occupies residues 1–31 (MVSAAASAGRLGSALPFLLVLLDLQYQGAEC). 9 TPR repeats span residues 37-70 (VEKQLEMGKKLLAAGQLADALSHFHAAIEGDSDN), 71-104 (YIAYYRRATVYLAMGKSKAAIRDLSKVVELKQDF), 105-137 (TSRLQRGHLLLKQGKFDEAEDDFKNVLKSNPSN), 153-186 (LQRLYSQALSAYRQEDYEAAIPLLDEILAVCVWD), 187-220 (AELRELRAECYIKEGEPSKAISDLKAAAKLKSDN), 221-254 (TEAFYKISRIYYQLGDHELSLSEVRECLKLDQDH), 267-300 (LNKQIESAEEFIREGRYEDAISKYDSVMKTEPDV), 305-338 (TRAKERICHCLSKNQQATEAITVCTQVLQLEPTN), and 339-372 (VNALKDRAEAYLLEDLYEEAIKDYETAQANSEND). Cys247 and Cys257 are joined by a disulfide. A disulfide bridge links Cys312 with Cys328. Positions 374–392 (QIREGLERAQRMLKQSQKR) are flexible linker. A J domain is found at 393–461 (DYYKILGVKR…EMRRKFDAGE (69 aa)).

It is found in the endoplasmic reticulum. In terms of biological role, may be involved in the unfolded protein response (UPR) during ER stress. In Gallus gallus (Chicken), this protein is DnaJ homolog subfamily C member 3 (DNAJC3).